The following is a 3907-amino-acid chain: A-kinase anchor protein 9 (3907 aa).

Basic and acidic residues predominate over residues 1 to 14 (MEDEERQKKLEAGK). The segment at 1-57 (MEDEERQKKLEAGKAKLAQFRQRKAQSDGQSPSKKQKKKRKTSSSKHDVSAHHDLNI) is disordered. A compositionally biased stretch (basic residues) spans 34–44 (KKQKKKRKTSS). A compositionally biased stretch (basic and acidic residues) spans 45–56 (SKHDVSAHHDLN). Coiled coils occupy residues 152-902 (DSPT…ELHL), 932-1010 (EVVE…ENVQ), 1088-1173 (QPSE…QTMK), 1241-1268 (ELQD…EEYN), 1324-1380 (KLSS…ESTV), 1422-1447 (VKEE…VAKV), and 1573-1647 (SMDA…DNEN). The residue at position 153 (Ser-153) is a Phosphoserine. Ser-1327 bears the Phosphoserine mark. Residues 1682–1692 (STQTQNGNENQ) are compositionally biased toward low complexity. The interval 1682–1713 (STQTQNGNENQGEVEEQTFKEKELDRKPEDVP) is disordered. A compositionally biased stretch (basic and acidic residues) spans 1698–1711 (QTFKEKELDRKPED). The residue at position 1765 (Ser-1765) is a Phosphoserine. 6 coiled-coil regions span residues 1845–2443 (NISS…VEKI), 2532–2549 (ETEM…IVEE), 2591–2764 (QLRE…SKKA), 3061–3088 (LNCL…ADRR), 3120–3466 (ELLE…NLNE), and 3583–3685 (SLTE…NDSL). The PKA-RII subunit binding domain stretch occupies residues 2542–2555 (NLQKIVEEKVAAAL). The interval 3377–3405 (RQQMEKDRQVHRKTLQTEQEANTEGQKKM) is disordered. 4 positions are modified to phosphoserine: Ser-3690, Ser-3842, Ser-3865, and Ser-3897.

Interacts with the regulatory region of protein kinase N (PKN), protein phosphatase 2A (PP2A), protein phosphatase 1 (PP1) and the immature non-phosphorylated form of PKC epsilon. Interacts with CIP4 and FNBP1. Interacts with chloride intracellular channel proteins CLIC1, CLIC4 and CLIC5. CSNK1D binding promotes its centrosomal subcellular location. Interacts with GM130/GOLGA2; leading to recruitment to the Golgi apparatus. Interacts with KCNQ1; targets protein kinase A (PKA) catalytic and regulatory subunits and protein phosphatase 1 (PP1), to the heterodimer KCNQ1-KCNE1. Interacts with PDE4DIP isoform 13/MMG8/SMYLE; this interaction stabilizes both proteins. In complex with PDE4DIP isoform 13, recruits CAMSAP2 to the Golgi apparatus. Forms a pericentrosomal complex with CDK5RAP2, EB1/MAPRE1 and PDE4DIP isoform 13; within this complex, MAPRE1 binding to CDK5RAP2 may be mediated by PDE4DIP. Interacts with MAPRE1 and MAPRE3. Interacts (via C-terminus) with CAMSAP2; this interaction is much stronger in the presence of PDE4DIP isoform 13/MMG8/SMYLE. Interacts with CAMSAP3. Interacts (via C-terminus) with the gamma-tubulin ring complex (gamma-TuRC), composed of gamma-tubulin, TUBGCP2, TUBGCP3, TUBGCP4, TUBGCP5 and TUBGCP6. In terms of tissue distribution, widely expressed. Isoform 4: Highly expressed in skeletal muscle and in pancreas.

The protein resides in the golgi apparatus. The protein localises to the cytoplasm. It is found in the cytoskeleton. It localises to the microtubule organizing center. Its subcellular location is the centrosome. In terms of biological role, scaffolding protein that assembles several protein kinases and phosphatases on the centrosome and Golgi apparatus. Required to maintain the integrity of the Golgi apparatus. Required for microtubule nucleation at the cis-side of the Golgi apparatus. Required for association of the centrosomes with the poles of the bipolar mitotic spindle during metaphase. In complex with PDE4DIP isoform 13/MMG8/SMYLE, recruits CAMSAP2 to the Golgi apparatus and tethers non-centrosomal minus-end microtubules to the Golgi, an important step for polarized cell movement. In complex with PDE4DIP isoform 13/MMG8/SMYLE, EB1/MAPRE1 and CDK5RAP2, contributes to microtubules nucleation and extension also from the centrosome to the cell periphery. Functionally, associated with the N-methyl-D-aspartate receptor and is specifically found in the neuromuscular junction (NMJ) as well as in neuronal synapses, suggesting a role in the organization of postsynaptic specializations. The sequence is that of A-kinase anchor protein 9 (AKAP9) from Homo sapiens (Human).